Here is a 482-residue protein sequence, read N- to C-terminus: Ribulose bisphosphate carboxylase large chain (482 aa).

The propeptide occupies 1-2; sequence MS. P3 carries the post-translational modification N-acetylproline. K14 bears the N6,N6,N6-trimethyllysine mark. Residues N123 and T173 each coordinate substrate. K175 functions as the Proton acceptor in the catalytic mechanism. Substrate is bound at residue K177. Positions 201, 203, and 204 each coordinate Mg(2+). Residue K201 is modified to N6-carboxylysine. Catalysis depends on H294, which acts as the Proton acceptor. Residues R295, H327, and S379 each coordinate substrate.

Belongs to the RuBisCO large chain family. Type I subfamily. As to quaternary structure, heterohexadecamer of 8 large chains and 8 small chains; disulfide-linked. The disulfide link is formed within the large subunit homodimers. It depends on Mg(2+) as a cofactor. The disulfide bond which can form in the large chain dimeric partners within the hexadecamer appears to be associated with oxidative stress and protein turnover.

The protein resides in the plastid. It localises to the chloroplast. The enzyme catalyses 2 (2R)-3-phosphoglycerate + 2 H(+) = D-ribulose 1,5-bisphosphate + CO2 + H2O. It carries out the reaction D-ribulose 1,5-bisphosphate + O2 = 2-phosphoglycolate + (2R)-3-phosphoglycerate + 2 H(+). Its function is as follows. RuBisCO catalyzes two reactions: the carboxylation of D-ribulose 1,5-bisphosphate, the primary event in carbon dioxide fixation, as well as the oxidative fragmentation of the pentose substrate in the photorespiration process. Both reactions occur simultaneously and in competition at the same active site. This is Ribulose bisphosphate carboxylase large chain from Phytolacca americana (American pokeweed).